A 1892-amino-acid polypeptide reads, in one-letter code: Kinesin-like protein KIN-12E (1892 aa).

Positions 1 to 28 (MAGHGAGGRRASTSRAAARRVEAETNEN) are disordered. One can recognise a Kinesin motor domain in the interval 64-401 (NVQVLIRIRP…LKFAQRAKLI (338 aa)). 145-152 (GQTGSGKT) contacts ATP. 5 coiled-coil regions span residues 406 to 438 (KVNE…QQNM), 486 to 526 (SLRR…TTVK), 1066 to 1139 (LFSN…LHEQ), 1303 to 1357 (KLLQ…LAEN), and 1396 to 1528 (ISET…SYQI). Positions 1633-1649 (LHESNSDTGHTKFEKPS) are enriched in basic and acidic residues. Residues 1633–1656 (LHESNSDTGHTKFEKPSGRTRGSG) are disordered. Residues 1780 to 1841 (MDQRKADLLE…LVGSNQAIAE (62 aa)) are a coiled coil. A disordered region spans residues 1870 to 1892 (HARHEHSRLQAAKSSRTRRGSHQ).

This sequence belongs to the TRAFAC class myosin-kinesin ATPase superfamily. Kinesin family. KIN-12 subfamily.

The protein is Kinesin-like protein KIN-12E of Oryza sativa subsp. japonica (Rice).